Here is a 20-residue protein sequence, read N- to C-terminus: Unknown protein from 2D-PAGE of needles (20 aa).

This is Unknown protein from 2D-PAGE of needles from Pinus pinaster (Maritime pine).